The chain runs to 226 residues: Leucyl/phenylalanyl-tRNA--protein transferase (226 aa).

This sequence belongs to the L/F-transferase family.

Its subcellular location is the cytoplasm. The catalysed reaction is N-terminal L-lysyl-[protein] + L-leucyl-tRNA(Leu) = N-terminal L-leucyl-L-lysyl-[protein] + tRNA(Leu) + H(+). It carries out the reaction N-terminal L-arginyl-[protein] + L-leucyl-tRNA(Leu) = N-terminal L-leucyl-L-arginyl-[protein] + tRNA(Leu) + H(+). The enzyme catalyses L-phenylalanyl-tRNA(Phe) + an N-terminal L-alpha-aminoacyl-[protein] = an N-terminal L-phenylalanyl-L-alpha-aminoacyl-[protein] + tRNA(Phe). In terms of biological role, functions in the N-end rule pathway of protein degradation where it conjugates Leu, Phe and, less efficiently, Met from aminoacyl-tRNAs to the N-termini of proteins containing an N-terminal arginine or lysine. The chain is Leucyl/phenylalanyl-tRNA--protein transferase from Salinibacter ruber (strain DSM 13855 / M31).